The primary structure comprises 300 residues: Tyrosine recombinase XerC (300 aa).

Residues 1 to 86 form the Core-binding (CB) domain; that stretch reads MESVLDAFDQ…AVKTFTAWAV (86 aa). The Tyr recombinase domain maps to 107–294; it reads TLPAVLRQDQ…TVARLRAVHD (188 aa). Catalysis depends on residues Arg151, Lys175, His246, Arg249, and His272. The active-site O-(3'-phospho-DNA)-tyrosine intermediate is Tyr281.

Belongs to the 'phage' integrase family. XerC subfamily. In terms of assembly, forms a cyclic heterotetrameric complex composed of two molecules of XerC and two molecules of XerD.

Its subcellular location is the cytoplasm. Site-specific tyrosine recombinase, which acts by catalyzing the cutting and rejoining of the recombining DNA molecules. The XerC-XerD complex is essential to convert dimers of the bacterial chromosome into monomers to permit their segregation at cell division. It also contributes to the segregational stability of plasmids. In Mycobacterium sp. (strain KMS), this protein is Tyrosine recombinase XerC.